We begin with the raw amino-acid sequence, 350 residues long: Small ribosomal subunit protein uS3 (350 aa).

The region spanning 38–106 is the KH type-2 domain; sequence IRKMMSRGME…QVQLNILEVK (69 aa). Positions 211–350 are disordered; the sequence is AEREAQEALQ…TPGTPEKAEE (140 aa). Positions 222–232 are enriched in basic residues; that stretch reads QTRRDRPRRGP. A compositionally biased stretch (low complexity) spans 261–350; that stretch reads NAPAAETAAS…TPGTPEKAEE (90 aa).

Belongs to the universal ribosomal protein uS3 family. In terms of assembly, part of the 30S ribosomal subunit. Forms a tight complex with proteins S10 and S14.

Functionally, binds the lower part of the 30S subunit head. Binds mRNA in the 70S ribosome, positioning it for translation. The polypeptide is Small ribosomal subunit protein uS3 (Frankia alni (strain DSM 45986 / CECT 9034 / ACN14a)).